The sequence spans 118 residues: Small ribosomal subunit protein uS13 (118 aa).

A disordered region spans residues 94-118 (SLPLRGQRTKTNARTRKGPRKPIRK).

This sequence belongs to the universal ribosomal protein uS13 family. Part of the 30S ribosomal subunit. Forms a loose heterodimer with protein S19. Forms two bridges to the 50S subunit in the 70S ribosome.

Its function is as follows. Located at the top of the head of the 30S subunit, it contacts several helices of the 16S rRNA. In the 70S ribosome it contacts the 23S rRNA (bridge B1a) and protein L5 of the 50S subunit (bridge B1b), connecting the 2 subunits; these bridges are implicated in subunit movement. Contacts the tRNAs in the A and P-sites. This is Small ribosomal subunit protein uS13 from Shewanella baltica (strain OS223).